The primary structure comprises 218 residues: Peptide methionine sulfoxide reductase MsrA (218 aa).

Cysteine 57 is a catalytic residue.

It belongs to the MsrA Met sulfoxide reductase family.

It carries out the reaction L-methionyl-[protein] + [thioredoxin]-disulfide + H2O = L-methionyl-(S)-S-oxide-[protein] + [thioredoxin]-dithiol. The catalysed reaction is [thioredoxin]-disulfide + L-methionine + H2O = L-methionine (S)-S-oxide + [thioredoxin]-dithiol. Has an important function as a repair enzyme for proteins that have been inactivated by oxidation. Catalyzes the reversible oxidation-reduction of methionine sulfoxide in proteins to methionine. This is Peptide methionine sulfoxide reductase MsrA from Brucella anthropi (Ochrobactrum anthropi).